Reading from the N-terminus, the 116-residue chain is Iron-sulfur cluster insertion protein ErpA (116 aa).

Residues C44, C108, and C110 each contribute to the iron-sulfur cluster site.

It belongs to the HesB/IscA family. In terms of assembly, homodimer. The cofactor is iron-sulfur cluster.

Required for insertion of 4Fe-4S clusters for at least IspG. In Shewanella denitrificans (strain OS217 / ATCC BAA-1090 / DSM 15013), this protein is Iron-sulfur cluster insertion protein ErpA.